Reading from the N-terminus, the 168-residue chain is Peptidoglycan-associated lipoprotein (168 aa).

A signal peptide spans 1 to 21; it reads MEMLKFGKFAALALAMAVAVG. The N-palmitoyl cysteine moiety is linked to residue Cys-22. A lipid anchor (S-diacylglycerol cysteine) is attached at Cys-22. In terms of domain architecture, OmpA-like spans 56–168; the sequence is SDEAALRAIT…AQNRRVELKK (113 aa). The segment at 147 to 168 is disordered; it reads RPVATGHDEQSWAQNRRVELKK.

It belongs to the Pal lipoprotein family. As to quaternary structure, the Tol-Pal system is composed of five core proteins: the inner membrane proteins TolA, TolQ and TolR, the periplasmic protein TolB and the outer membrane protein Pal. They form a network linking the inner and outer membranes and the peptidoglycan layer.

The protein localises to the cell outer membrane. Part of the Tol-Pal system, which plays a role in outer membrane invagination during cell division and is important for maintaining outer membrane integrity. The sequence is that of Peptidoglycan-associated lipoprotein from Pseudomonas aeruginosa (strain ATCC 15692 / DSM 22644 / CIP 104116 / JCM 14847 / LMG 12228 / 1C / PRS 101 / PAO1).